We begin with the raw amino-acid sequence, 152 residues long: Complexin (152 aa).

A disordered region spans residues 1–119 (MAAFIAKQMV…EEEDDDEFAK (119 aa)). Residues 23 to 39 (DEGEKEGNENAEEEAAA) show a composition bias toward acidic residues. Composition is skewed to basic and acidic residues over residues 41-82 (EEAR…VKEE) and 90-104 (DEGR…KEEL). The interaction with the SNARE complex stretch occupies residues 59 to 75 (EEEREEMRQTIRDKYGL). Cys-149 carries the post-translational modification Cysteine methyl ester. Cys-149 carries the S-farnesyl cysteine lipid modification. A propeptide spans 150–152 (SLQ) (removed in mature form).

This sequence belongs to the complexin/synaphin family. As to quaternary structure, binds to the SNARE core complex containing SNAP25, synaptobrevin and syntaxin-1.

The protein localises to the membrane. The protein resides in the cytoplasm. It is found in the cytosol. In terms of biological role, positively regulates a late step in synaptic vesicle exocytosis. The protein is Complexin (cpx) of Doryteuthis pealeii (Longfin inshore squid).